Consider the following 1167-residue polypeptide: Topoisomerase 1-associated factor 1 (1167 aa).

5 disordered regions span residues 332–353 (SKRWNKPRRGRKAQDMSVNNDF), 563–594 (SRRRARKRKREEQLVNKGSDEEQESEDEDYAE), 889–969 (KYSH…LENT), 981–1093 (YVHA…DAID), and 1105–1167 (FDDD…SDSE). The span at 572–582 (REEQLVNKGSD) shows a compositional bias: basic and acidic residues. Composition is skewed to acidic residues over residues 583–593 (EEQESEDEDYA) and 949–958 (EEEPVDEETL). 2 stretches are compositionally biased toward basic and acidic residues: residues 959–969 (EERRQARLENT) and 996–1013 (EFFRLEEERRNEQSERIK). Residues 1062–1074 (ELEEDDILMDDME) show a composition bias toward acidic residues. Over residues 1078 to 1088 (RASSGEYSSND) the composition is skewed to polar residues. A compositionally biased stretch (basic and acidic residues) spans 1110 to 1127 (AFGRDRDKDETSVDRDGA).

It belongs to the timeless family.

The protein resides in the nucleus. Functionally, involved in chromosome segregation during meiosis and DNA damage repair. The sequence is that of Topoisomerase 1-associated factor 1 (tof1) from Emericella nidulans (strain FGSC A4 / ATCC 38163 / CBS 112.46 / NRRL 194 / M139) (Aspergillus nidulans).